A 908-amino-acid polypeptide reads, in one-letter code: Protein translocase subunit SecA (908 aa).

Residues Gln87, 105–109, and Asp513 contribute to the ATP site; that span reads GEGKT. Low complexity predominate over residues 852-863; it reads ARRAQAQHATAE. A disordered region spans residues 852–908; that stretch reads ARRAQAQHATAENQLADDEAEAASPQTVVRDERKVGRNEPCPCGSGKKYKQCHGKID. Residues Cys892, Cys894, Cys903, and His904 each coordinate Zn(2+). The segment covering 898–908 has biased composition (basic residues); that stretch reads KKYKQCHGKID.

The protein belongs to the SecA family. In terms of assembly, monomer and homodimer. Part of the essential Sec protein translocation apparatus which comprises SecA, SecYEG and auxiliary proteins SecDF-YajC and YidC. It depends on Zn(2+) as a cofactor.

It localises to the cell inner membrane. The protein resides in the cytoplasm. The enzyme catalyses ATP + H2O + cellular proteinSide 1 = ADP + phosphate + cellular proteinSide 2.. Part of the Sec protein translocase complex. Interacts with the SecYEG preprotein conducting channel. Has a central role in coupling the hydrolysis of ATP to the transfer of proteins into and across the cell membrane, serving both as a receptor for the preprotein-SecB complex and as an ATP-driven molecular motor driving the stepwise translocation of polypeptide chains across the membrane. The polypeptide is Protein translocase subunit SecA (Vibrio atlanticus (strain LGP32) (Vibrio splendidus (strain Mel32))).